Here is a 125-residue protein sequence, read N- to C-terminus: Protein ApaG (125 aa).

One can recognise an ApaG domain in the interval 1-125; that stretch reads MINSPRVCVQ…FRLAVPTLIH (125 aa).

The protein is Protein ApaG of Klebsiella pneumoniae (strain 342).